The sequence spans 421 residues: Testin (421 aa).

Residues Met-92–Asp-199 enclose the PET domain. Residues Lys-134 to Cys-164 form a disordered region. Positions Pro-155 to Cys-164 are enriched in basic and acidic residues. LIM zinc-binding domains follow at residues Tyr-234–Glu-297, Pro-299–Val-359, and Gln-362–Ser-421.

It belongs to the prickle / espinas / testin family. As to quaternary structure, interacts via LIM domain 1 with ZYX. Interacts (via LIM domain 3) with ENAH and VASP. Interacts with ALKBH4, talin, actin, alpha-actinin, GRIP1 and PXN. Interacts (via LIM domain 2) with ACTL7A (via N-terminus). Heterodimer with ACTL7A; the heterodimer interacts with ENAH to form a heterotrimer.

The protein localises to the cytoplasm. It is found in the cell junction. Its subcellular location is the focal adhesion. Its function is as follows. Scaffold protein that may play a role in cell adhesion, cell spreading and in the reorganization of the actin cytoskeleton. Plays a role in the regulation of cell proliferation. May act as a tumor suppressor. This chain is Testin (TES), found in Rhinolophus ferrumequinum (Greater horseshoe bat).